An 82-amino-acid chain; its full sequence is RNA-binding protein Hfq (82 aa).

One can recognise a Sm domain in the interval 9 to 69 (DQLLNTARKD…ISTIIPAKII (61 aa)).

The protein belongs to the Hfq family. As to quaternary structure, homohexamer.

RNA chaperone that binds small regulatory RNA (sRNAs) and mRNAs to facilitate mRNA translational regulation in response to envelope stress, environmental stress and changes in metabolite concentrations. Also binds with high specificity to tRNAs. This Leptospira borgpetersenii serovar Hardjo-bovis (strain L550) protein is RNA-binding protein Hfq.